The following is a 490-amino-acid chain: MVPVVALVGRPNVGKSTLFNRLTRTRDALVADFPGLTRDRKYGRAEIEGREFICIDTGGIDGTEDGVETRMAEQSLLAIEEADVVLFMVDARAGLMPADEAIAKHLRSREKPTFLVANKTDGLDPDQAVVDFYSLGLGEIYPIAASHGRGVLSLLEHVLLPWMEDLAPQEEVDEDAEYWAQFEAEENGEEEEEDDFDPQSLPIKLAIVGRPNVGKSTLTNRILGEERVVVYDMPGTTRDSIYIPMERDGREYVLIDTAGVRKRGKITDAVEKFSVIKTLQAIEDANVVMLVIDAREGISDQDLSLLGFILNSGRSLVIVVNKWDGLSQEVKEQVKETLDFRLGFIDFARVHFISALHGSGVGNLFESVREAYDSSTRRVGTSMLTRIMTMAVEDHQPPLVRGRRVKLKYAHAGGYNPPIVVIHGNQVKDLPDSYKRYLMNYFRKSLDVMGSPIRIQFKEGENPYANKRNTLTPTQMRKRKRLMKHIKKNK.

2 EngA-type G domains span residues 3 to 166 (PVVA…MEDL) and 203 to 376 (IKLA…DSST). Residues 9-16 (GRPNVGKS), 56-60 (DTGGI), 118-121 (NKTD), 209-216 (GRPNVGKS), 256-260 (DTAGV), and 321-324 (NKWD) contribute to the GTP site. Residues 377-461 (RRVGTSMLTR…PIRIQFKEGE (85 aa)) enclose the KH-like domain.

Belongs to the TRAFAC class TrmE-Era-EngA-EngB-Septin-like GTPase superfamily. EngA (Der) GTPase family. As to quaternary structure, associates with the 50S ribosomal subunit.

GTPase that plays an essential role in the late steps of ribosome biogenesis. This Escherichia coli O157:H7 protein is GTPase Der.